A 284-amino-acid chain; its full sequence is Tropomyosin (284 aa).

Positions 1-284 (MDAIKKKMLA…DSTFAELAGY (284 aa)) form a coiled coil. Positions 105 to 131 (RLQSATEKLEEASKAADESERGRKVLE) are disordered.

This sequence belongs to the tropomyosin family. In terms of assembly, homodimer.

Functionally, tropomyosin, in association with the troponin complex, plays a central role in the calcium dependent regulation of muscle contraction. In Cornu aspersum (Brown garden snail), this protein is Tropomyosin.